Consider the following 247-residue polypeptide: ATP synthase subunit a, chloroplastic (247 aa).

The next 5 membrane-spanning stretches (helical) occupy residues 38–58 (QVLI…IIAV), 95–115 (VPFI…GALL), 134–154 (INTT…AGLT), 199–219 (LVVV…VMFL), and 220–240 (GLFT…AYIG).

It belongs to the ATPase A chain family. In terms of assembly, F-type ATPases have 2 components, CF(1) - the catalytic core - and CF(0) - the membrane proton channel. CF(1) has five subunits: alpha(3), beta(3), gamma(1), delta(1), epsilon(1). CF(0) has four main subunits: a, b, b' and c.

It is found in the plastid. The protein resides in the chloroplast thylakoid membrane. Its function is as follows. Key component of the proton channel; it plays a direct role in the translocation of protons across the membrane. The protein is ATP synthase subunit a, chloroplastic of Carica papaya (Papaya).